The primary structure comprises 615 residues: Probable inactive purple acid phosphatase 24 (615 aa).

The first 26 residues, 1–26, serve as a signal peptide directing secretion; sequence MARVLGVLLCLLALFSSSLCLDHANG. N-linked (GlcNAc...) asparagine glycans are attached at residues Asn-129, Asn-267, and Asn-275. Asp-297 provides a ligand contact to Fe cation. Asn-318 is a glycosylation site (N-linked (GlcNAc...) asparagine). 2 residues coordinate Fe cation: Asp-338 and Tyr-341. Asp-338 contacts Zn(2+). Positions 371, 460, and 502 each coordinate Zn(2+). A substrate-binding site is contributed by Asn-371. 502–504 serves as a coordination point for substrate; sequence HVH. His-504 is a binding site for Fe cation. The N-linked (GlcNAc...) asparagine glycan is linked to Asn-592.

Belongs to the metallophosphoesterase superfamily. Purple acid phosphatase family. As to quaternary structure, homodimer. Requires Fe cation as cofactor. The cofactor is Zn(2+). In terms of tissue distribution, specifically expressed in flowers.

The protein resides in the secreted. This is Probable inactive purple acid phosphatase 24 (PAP24) from Arabidopsis thaliana (Mouse-ear cress).